The sequence spans 407 residues: Probable protein S-acyltransferase 9 (407 aa).

The next 2 helical transmembrane spans lie at 28-48 (WSIP…SVFV) and 62-82 (GHVF…LLFL). The DHHC domain maps to 136–179 (KYCDTCMLYRPPRCSHCSICNNCVERFDHHCPWRNYRYFFMFVS). The active-site S-palmitoyl cysteine intermediate is the cysteine 166. A run of 2 helical transmembrane segments spans residues 174 to 194 (FFMF…MSAL) and 217 to 237 (AVML…LTGF). Positions 300 to 407 (LATTWERPEE…RSYAAAEEGR (108 aa)) are disordered. The segment covering 346-356 (DTAHHKIDIDQ) has biased composition (basic and acidic residues).

It belongs to the DHHC palmitoyltransferase family. As to expression, mainly expressed in seeds.

It localises to the cell membrane. The catalysed reaction is L-cysteinyl-[protein] + hexadecanoyl-CoA = S-hexadecanoyl-L-cysteinyl-[protein] + CoA. In terms of biological role, palmitoyl acyltransferase. This is Probable protein S-acyltransferase 9 (PAT09) from Arabidopsis thaliana (Mouse-ear cress).